Here is a 96-residue protein sequence, read N- to C-terminus: NADH-ubiquinone oxidoreductase chain 6 (96 aa).

Transmembrane regions (helical) follow at residues 24–44 (MSLL…LGSI) and 48–68 (WFAY…FIYV).

This sequence belongs to the complex I subunit 6 family.

It is found in the mitochondrion membrane. The enzyme catalyses a ubiquinone + NADH + 5 H(+)(in) = a ubiquinol + NAD(+) + 4 H(+)(out). Core subunit of the mitochondrial membrane respiratory chain NADH dehydrogenase (Complex I) that is believed to belong to the minimal assembly required for catalysis. Complex I functions in the transfer of electrons from NADH to the respiratory chain. The immediate electron acceptor for the enzyme is believed to be ubiquinone. In Albinaria turrita (Door snail), this protein is NADH-ubiquinone oxidoreductase chain 6 (ND6).